The sequence spans 522 residues: Calcium-dependent protein kinase 14 (522 aa).

Low complexity-rich tracts occupy residues 1–12 (MGNCCPPGSSSE) and 19–45 (SSGS…AAPA). The interval 1–58 (MGNCCPPGSSSEPDPPPASSGSSRPAGSAGAAASPATISPSAAPAPAKPPAPIGPVLG) is disordered. The N-myristoyl glycine moiety is linked to residue Gly2. Positions 68–326 (YTVGKELGRG…AYDVLNHPWI (259 aa)) constitute a Protein kinase domain. Residues 74–82 (LGRGQFGVT) and Lys97 each bind ATP. Asp192 functions as the Proton acceptor in the catalytic mechanism. Residues 332-362 (APDTPLDNAVLGRLKQFRAMNQFKKAALRVI) are autoinhibitory domain. EF-hand domains lie at 369 to 404 (EEIR…KGTK), 405 to 440 (LTEA…MNRM), 441 to 476 (DREE…KGLM), and 480 to 511 (EIKD…GDPE). Asp382, Asp384, Ser386, Thr388, Glu393, Asp418, Asp420, Asn422, Thr424, Glu429, Asp454, Asp456, Ser458, Tyr460, Glu465, Asp489, Asp491, Asp493, Arg495, and Glu500 together coordinate Ca(2+).

The protein belongs to the protein kinase superfamily. Ser/Thr protein kinase family. CDPK subfamily.

It localises to the membrane. The catalysed reaction is L-seryl-[protein] + ATP = O-phospho-L-seryl-[protein] + ADP + H(+). It catalyses the reaction L-threonyl-[protein] + ATP = O-phospho-L-threonyl-[protein] + ADP + H(+). With respect to regulation, activated by calcium. Autophosphorylation may play an important role in the regulation of the kinase activity. Functionally, may play a role in signal transduction pathways that involve calcium as a second messenger. The sequence is that of Calcium-dependent protein kinase 14 from Oryza sativa subsp. japonica (Rice).